An 81-amino-acid polypeptide reads, in one-letter code: Cytochrome b559 subunit alpha (81 aa).

A helical transmembrane segment spans residues 21–35 (VIHSVTIPSLFVGGW). His-23 contacts heme.

This sequence belongs to the PsbE/PsbF family. As to quaternary structure, heterodimer of an alpha subunit and a beta subunit. PSII is composed of 1 copy each of membrane proteins PsbA, PsbB, PsbC, PsbD, PsbE, PsbF, PsbH, PsbI, PsbJ, PsbK, PsbL, PsbM, PsbT, PsbY, PsbZ, Psb30/Ycf12, at least 3 peripheral proteins of the oxygen-evolving complex and a large number of cofactors. It forms dimeric complexes. Heme b is required as a cofactor.

The protein localises to the plastid. The protein resides in the chloroplast thylakoid membrane. Functionally, this b-type cytochrome is tightly associated with the reaction center of photosystem II (PSII). PSII is a light-driven water:plastoquinone oxidoreductase that uses light energy to abstract electrons from H(2)O, generating O(2) and a proton gradient subsequently used for ATP formation. It consists of a core antenna complex that captures photons, and an electron transfer chain that converts photonic excitation into a charge separation. The sequence is that of Cytochrome b559 subunit alpha from Euglena gracilis.